Here is a 382-residue protein sequence, read N- to C-terminus: Galactokinase (382 aa).

34-37 (EHTD) serves as a coordination point for substrate. 124–130 (GAGLSSS) lines the ATP pocket. Serine 130 and glutamate 162 together coordinate Mg(2+). Aspartate 174 functions as the Proton acceptor in the catalytic mechanism. Tyrosine 223 serves as a coordination point for substrate.

Belongs to the GHMP kinase family. GalK subfamily.

The protein resides in the cytoplasm. It carries out the reaction alpha-D-galactose + ATP = alpha-D-galactose 1-phosphate + ADP + H(+). The protein operates within carbohydrate metabolism; galactose metabolism. Functionally, catalyzes the transfer of the gamma-phosphate of ATP to D-galactose to form alpha-D-galactose-1-phosphate (Gal-1-P). In Escherichia coli O9:H4 (strain HS), this protein is Galactokinase.